Here is a 276-residue protein sequence, read N- to C-terminus: MLLRFTKMHGLGNDFMVIDLVSQHAHIQPKHAKQWGDRHTGVGFDQLLIVEPPQNPDVDFRYRIFNSDGSEVEQCGNGARCFARFVVDKRLTVKRKIKVETKGGIIELDIRPDGQIRVDMGPPRLVPAEIPFQAEREALSYSLEVDGQQVELAAASMGNPHAVLRVDSVERAPVHELGPKIEHHPRFPQRVNVGFLQVVDRRHARLRVWERGAGETQACGTGACAAAVAAIRQGWMDSPVQIELPGGRLSIEWAGPGQPVMMTGPAVRVFEGQVRL.

3 residues coordinate substrate: Asn-13, Gln-46, and Asn-66. Cys-75 (proton donor) is an active-site residue. Substrate contacts are provided by residues Gly-76–Asn-77, Asn-159, Asn-192, and Glu-210–Arg-211. The Proton acceptor role is filled by Cys-219. Gly-220–Thr-221 contributes to the substrate binding site.

Belongs to the diaminopimelate epimerase family. Homodimer.

It is found in the cytoplasm. It carries out the reaction (2S,6S)-2,6-diaminopimelate = meso-2,6-diaminopimelate. It functions in the pathway amino-acid biosynthesis; L-lysine biosynthesis via DAP pathway; DL-2,6-diaminopimelate from LL-2,6-diaminopimelate: step 1/1. Its function is as follows. Catalyzes the stereoinversion of LL-2,6-diaminopimelate (L,L-DAP) to meso-diaminopimelate (meso-DAP), a precursor of L-lysine and an essential component of the bacterial peptidoglycan. This Stutzerimonas stutzeri (strain A1501) (Pseudomonas stutzeri) protein is Diaminopimelate epimerase.